Consider the following 166-residue polypeptide: MSEETGAADTLTNGEDHLPQVALIAQYVKDLSFENPSAPGIYQAPEQPKIDVQFNIGSQQAGEDVYEVALKIEIKATQGDLTAYAVELVYAGLFGIRNVPEEHLPPFLLAEAPRLLFPFARRVAADAIRDGNFPSLVLEPIDFGALYMQQAEQQTALAESQPAGEA.

It belongs to the SecB family. As to quaternary structure, homotetramer, a dimer of dimers. One homotetramer interacts with 1 SecA dimer.

It localises to the cytoplasm. In terms of biological role, one of the proteins required for the normal export of preproteins out of the cell cytoplasm. It is a molecular chaperone that binds to a subset of precursor proteins, maintaining them in a translocation-competent state. It also specifically binds to its receptor SecA. This chain is Protein-export protein SecB, found in Rhizorhabdus wittichii (strain DSM 6014 / CCUG 31198 / JCM 15750 / NBRC 105917 / EY 4224 / RW1) (Sphingomonas wittichii).